The chain runs to 203 residues: High frequency lysogenization protein HflD homolog (203 aa).

This sequence belongs to the HflD family.

The protein resides in the cytoplasm. It localises to the cell inner membrane. The sequence is that of High frequency lysogenization protein HflD homolog from Aeromonas salmonicida (strain A449).